The following is a 159-amino-acid chain: D-aminoacyl-tRNA deacylase (159 aa).

The short motif at 142–143 (GP) is the Gly-cisPro motif, important for rejection of L-amino acids element.

This sequence belongs to the DTD family. In terms of assembly, homodimer.

Its subcellular location is the cytoplasm. It carries out the reaction glycyl-tRNA(Ala) + H2O = tRNA(Ala) + glycine + H(+). The enzyme catalyses a D-aminoacyl-tRNA + H2O = a tRNA + a D-alpha-amino acid + H(+). Functionally, an aminoacyl-tRNA editing enzyme that deacylates mischarged D-aminoacyl-tRNAs. Also deacylates mischarged glycyl-tRNA(Ala), protecting cells against glycine mischarging by AlaRS. Acts via tRNA-based rather than protein-based catalysis; rejects L-amino acids rather than detecting D-amino acids in the active site. By recycling D-aminoacyl-tRNA to D-amino acids and free tRNA molecules, this enzyme counteracts the toxicity associated with the formation of D-aminoacyl-tRNA entities in vivo and helps enforce protein L-homochirality. In Albidiferax ferrireducens (strain ATCC BAA-621 / DSM 15236 / T118) (Rhodoferax ferrireducens), this protein is D-aminoacyl-tRNA deacylase.